The following is a 747-amino-acid chain: Sulfhydryl oxidase 1 (747 aa).

A signal peptide spans 1 to 29 (MRRCNSGSGPPPSLLLLLLWLLAVPGANA). Residues 36-156 (YSPSDPLTLL…RERLIDALES (121 aa)) enclose the Thioredoxin domain. Catalysis depends on nucleophile residues cysteine 70 and cysteine 73. 2 cysteine pairs are disulfide-bonded: cysteine 70/cysteine 73 and cysteine 101/cysteine 110. An N-linked (GlcNAc...) (complex) asparagine glycan is attached at asparagine 130. Asparagine 243 is a glycosylation site (N-linked (GlcNAc...) asparagine). The cysteines at positions 393 and 405 are disulfide-linked. An ERV/ALR sulfhydryl oxidase domain is found at 396–503 (SEPHFRGFPC…EDPQFPKVQW (108 aa)). Arginine 401, tryptophan 408, and histidine 412 together coordinate FAD. Serine 426 carries the phosphoserine; by FAM20C modification. The cysteines at positions 449 and 452 are disulfide-linked. FAD-binding positions include aspartate 451, histidine 455, 478 to 485 (WSSHNRVN), lysine 500, and tryptophan 503. The cysteines at positions 509 and 512 are disulfide-linked. Residues 573–633 (SRNSTLDPGK…HMAELQRNEQ (61 aa)) are disordered. Residue asparagine 575 is glycosylated (N-linked (GlcNAc...) asparagine). Residues 621 to 633 (PPEHMAELQRNEQ) are compositionally biased toward basic and acidic residues. Residues 710 to 730 (ISLCVGLYSLSFMGLLAMYTY) form a helical membrane-spanning segment.

The protein belongs to the quiescin-sulfhydryl oxidase (QSOX) family. As to quaternary structure, monomer. Requires FAD as cofactor. Post-translationally, N-glycosylated. O-glycosylated on Thr and Ser residues. As to expression, expressed in heart, placenta, lung, liver, skeletal muscle, pancreas and very weakly in brain and kidney.

It localises to the golgi apparatus membrane. It is found in the secreted. The enzyme catalyses 2 R'C(R)SH + O2 = R'C(R)S-S(R)CR' + H2O2. Functionally, catalyzes the oxidation of sulfhydryl groups in peptide and protein thiols to disulfides with the reduction of oxygen to hydrogen peroxide. Plays a role in disulfide bond formation in a variety of extracellular proteins. In fibroblasts, required for normal incorporation of laminin into the extracellular matrix, and thereby for normal cell-cell adhesion and cell migration. In Homo sapiens (Human), this protein is Sulfhydryl oxidase 1 (QSOX1).